Here is a 349-residue protein sequence, read N- to C-terminus: Very-long-chain 3-oxoacyl-CoA reductase (349 aa).

The helical transmembrane segment at Ala19–Ala39 threads the bilayer. 7 residues coordinate NADP(+): Val65, Asp119, Asn146, Tyr221, Lys225, Val254, and Ser256. Catalysis depends on Tyr221, which acts as the Proton donor. The active-site Lowers pKa of active site Tyr is Lys225.

The protein belongs to the short-chain dehydrogenases/reductases (SDR) family.

It is found in the endoplasmic reticulum membrane. The catalysed reaction is a very-long-chain (3R)-3-hydroxyacyl-CoA + NADP(+) = a very-long-chain 3-oxoacyl-CoA + NADPH + H(+). The protein operates within lipid metabolism; fatty acid biosynthesis. Component of the microsomal membrane bound fatty acid elongation system, which produces the 26-carbon very long-chain fatty acids (VLCFA) from palmitate. Catalyzes the reduction of the 3-ketoacyl-CoA intermediate that is formed in each cycle of fatty acid elongation. VLCFAs serve as precursors for ceramide and sphingolipids. This is Very-long-chain 3-oxoacyl-CoA reductase from Candida albicans (strain SC5314 / ATCC MYA-2876) (Yeast).